The following is a 489-amino-acid chain: MTFRHCVAVDLGASSGRVMLARYDSKHRTLTLREIHRFVNCLQKTDGFDTWDIDSLEKDIRLGLKKVCNEGILIDSIGIDTWGVDYVLLDKQGQRVGLPVSYRDNRTTGIMPQALVQIGKSEIYRRSGIQFLPFNTIYQLRALTKQQPELTAQVAHALLMPDYFSYRLTGEMNWEYTNATTTQLVNINTDDWDDTLLAWTGAKKSWFGRPSHPGNVIGDWICPQGNRIPVVAVASHDTASAVIASPLANKHSAYLSSGTWSLMGFESKKPYTTDEALAANITNEGGAEGRYRVLKNIMGLWLLQRVLKERRITDLPVLIAQTEALPACRFLINPNDDRFINPDDMRAEIQAACRETDQPVPVSDAELARCIFDSLALLYADILHELANLRGEKFTQLHIVGGGCQNALLNQLCANACGIRVMAGPVEASTLGNIGIQLMTLDELNNVDDFRQVVSANYDLTTYIPNPDSEIARHVAQFQPKRQTKELCA.

Position 13 to 17 (13 to 17 (ASSGR)) interacts with ATP. A disulfide bond links Cys-68 and Cys-222. Substrate-binding positions include Gly-83 and 236-238 (HDT). Asp-237 (proton acceptor) is an active-site residue. Position 259 (Thr-259) interacts with ATP. Asn-296 contacts substrate. Residue Gln-304 participates in ATP binding. Cys-353 and Cys-370 are oxidised to a cystine. An ATP-binding site is contributed by Gly-402. Cys-413 and Cys-417 form a disulfide bridge.

Belongs to the rhamnulokinase family. Mg(2+) serves as cofactor.

It carries out the reaction L-rhamnulose + ATP = L-rhamnulose 1-phosphate + ADP + H(+). It functions in the pathway carbohydrate degradation; L-rhamnose degradation; glycerone phosphate from L-rhamnose: step 2/3. In terms of biological role, involved in the catabolism of L-rhamnose (6-deoxy-L-mannose). Catalyzes the transfer of the gamma-phosphate group from ATP to the 1-hydroxyl group of L-rhamnulose to yield L-rhamnulose 1-phosphate. The chain is Rhamnulokinase from Salmonella typhi.